Reading from the N-terminus, the 183-residue chain is Probable chemoreceptor glutamine deamidase CheD (183 aa).

Belongs to the CheD family.

It catalyses the reaction L-glutaminyl-[protein] + H2O = L-glutamyl-[protein] + NH4(+). Functionally, probably deamidates glutamine residues to glutamate on methyl-accepting chemotaxis receptors (MCPs), playing an important role in chemotaxis. This is Probable chemoreceptor glutamine deamidase CheD from Sinorhizobium medicae (strain WSM419) (Ensifer medicae).